A 184-amino-acid chain; its full sequence is ATP synthase subunit b, chloroplastic (184 aa).

The helical transmembrane segment at 31–53 (LINLAVVIGVLVYFGKGVLTTIL) threads the bilayer.

This sequence belongs to the ATPase B chain family. F-type ATPases have 2 components, F(1) - the catalytic core - and F(0) - the membrane proton channel. F(1) has five subunits: alpha(3), beta(3), gamma(1), delta(1), epsilon(1). F(0) has four main subunits: a(1), b(1), b'(1) and c(10-14). The alpha and beta chains form an alternating ring which encloses part of the gamma chain. F(1) is attached to F(0) by a central stalk formed by the gamma and epsilon chains, while a peripheral stalk is formed by the delta, b and b' chains.

The protein resides in the plastid. Its subcellular location is the chloroplast thylakoid membrane. Functionally, f(1)F(0) ATP synthase produces ATP from ADP in the presence of a proton or sodium gradient. F-type ATPases consist of two structural domains, F(1) containing the extramembraneous catalytic core and F(0) containing the membrane proton channel, linked together by a central stalk and a peripheral stalk. During catalysis, ATP synthesis in the catalytic domain of F(1) is coupled via a rotary mechanism of the central stalk subunits to proton translocation. In terms of biological role, component of the F(0) channel, it forms part of the peripheral stalk, linking F(1) to F(0). The sequence is that of ATP synthase subunit b, chloroplastic from Staurastrum punctulatum (Green alga).